A 118-amino-acid chain; its full sequence is Fluoride-specific ion channel FluC 1 (118 aa).

2 helical membrane-spanning segments follow: residues 5–25 (FLLV…ISVL) and 47–67 (FLLG…FLGT). 2 residues coordinate Na(+): G71 and T74. The helical transmembrane segment at 98-118 (YLGFTYVFGLIAAFLGMMLGV) threads the bilayer.

The protein belongs to the fluoride channel Fluc/FEX (TC 1.A.43) family.

The protein resides in the cell membrane. The catalysed reaction is fluoride(in) = fluoride(out). Its activity is regulated as follows. Na(+) is not transported, but it plays an essential structural role and its presence is essential for fluoride channel function. Fluoride-specific ion channel. Important for reducing fluoride concentration in the cell, thus reducing its toxicity. This chain is Fluoride-specific ion channel FluC 1, found in Listeria monocytogenes serovar 1/2a (strain ATCC BAA-679 / EGD-e).